Consider the following 433-residue polypeptide: Nuclear distribution protein PAC1 (433 aa).

The 33-residue stretch at 8 to 40 folds into the LisH domain; the sequence is QKDELHRAMLAYLHAAGMHNAYAALQHDAALAD. Residues 57–84 are a coiled coil; that stretch reads SVIRLQKKVIDLENRNAALLAELAAAAR. WD repeat units follow at residues 103-144, 146-184, 188-227, 230-269, 272-336, 339-378, and 381-429; these read SHRA…RTLK, HTKA…TNVK, GHDH…CIKT, GHAE…TKME, GHEH…CLRT, GHDN…CTKT, and AHSH…QTIK.

The protein belongs to the WD repeat LIS1/nudF family. In terms of assembly, self-associates. Interacts with NDL1 and dynein.

Its subcellular location is the cytoplasm. It is found in the cytoskeleton. The protein localises to the spindle pole. Positively regulates the activity of the minus-end directed microtubule motor protein dynein. Plays a central role in positioning the mitotic spindle at the bud neck during cell division. Targets cytoplasmic dynein to microtubule plus ends, thereby promoting dynein-mediated microtubule sliding along the bud cortex and consequently the movement of the mitotic spindle to the bud neck. In Cryptococcus neoformans var. neoformans serotype D (strain B-3501A) (Filobasidiella neoformans), this protein is Nuclear distribution protein PAC1.